The sequence spans 123 residues: Late histone H2B.L1 (123 aa).

Low complexity predominate over residues 1 to 10 (MPAKAQPAGK). The interval 1–33 (MPAKAQPAGKKGSKKAKAPRPSGGKKRRRRRKE) is disordered. Over residues 11–32 (KGSKKAKAPRPSGGKKRRRRRK) the composition is skewed to basic residues. Ser-110 is a glycosylation site (O-linked (GlcNAc) serine). Lys-118 is covalently cross-linked (Glycyl lysine isopeptide (Lys-Gly) (interchain with G-Cter in ubiquitin)).

The protein belongs to the histone H2B family. As to quaternary structure, the nucleosome is a histone octamer containing two molecules each of H2A, H2B, H3 and H4 assembled in one H3-H4 heterotetramer and two H2A-H2B heterodimers. The octamer wraps approximately 147 bp of DNA. In terms of processing, monoubiquitination of Lys-118 gives a specific tag for epigenetic transcriptional activation and is also prerequisite for histone H3 'Lys-4' and 'Lys-79' methylation. Post-translationally, glcNAcylation at Ser-110 promotes monoubiquitination of Lys-118. It fluctuates in response to extracellular glucose, and associates with transcribed genes.

It is found in the nucleus. It localises to the chromosome. Its function is as follows. Core component of nucleosome. Nucleosomes wrap and compact DNA into chromatin, limiting DNA accessibility to the cellular machineries which require DNA as a template. Histones thereby play a central role in transcription regulation, DNA repair, DNA replication and chromosomal stability. DNA accessibility is regulated via a complex set of post-translational modifications of histones, also called histone code, and nucleosome remodeling. The polypeptide is Late histone H2B.L1 (Strongylocentrotus purpuratus (Purple sea urchin)).